We begin with the raw amino-acid sequence, 2179 residues long: Probable inactive serine/threonine-protein kinase lvsG (2179 aa).

Positions 100–167 (DHDLNKNKNN…TSISLNDLNS (68 aa)) are disordered. 2 stretches are compositionally biased toward low complexity: residues 106–121 (NKNNNNNSEENNNNSG) and 141–159 (LSPSSSSSTSTTTTPLSTS). One copy of the WD 1 repeat lies at 216–256 (LYERSLKTSQQQQQQQQQQFKFQPNETLSLWEYFDEINSPP). Disordered regions lie at residues 281-300 (LDNKDDDDNNNNNNNSNSQS), 523-556 (DNDNDSRDDVDNSSSSNNNNNNNNEDQSGKTVGW), 589-621 (DSMGGGIGSIGSTGGITNSSNNGGGGGSGNSGK), 778-801 (KSLKYQRQQQTQQHQQQTQQQPQF), 844-959 (NNHH…NKPS), 1033-1055 (AQQQQSQQQSQQQQANSPNSKQL), 1079-1153 (GISK…STTD), 1339-1362 (NHSNSSNNNNNNNNNNNNNNKNGS), and 1785-1807 (TTTTTTTTTTTTTNNNNENPNSL). One can recognise a BEACH domain in the interval 463–801 (YHQPLENQFE…QQQTQQQPQF (339 aa)). Over residues 534–548 (NSSSSNNNNNNNNED) the composition is skewed to low complexity. Over residues 590–602 (SMGGGIGSIGSTG) the composition is skewed to gly residues. Low complexity-rich tracts occupy residues 783–800 (QRQQQTQQHQQQTQQQPQ), 853–943 (NSNI…GVNN), 1033–1047 (AQQQQSQQQSQQQQA), and 1084–1098 (TTNAPTTNNTTTNSN). The stretch at 1021-1049 (LQQQLQQQQQQQAQQQQSQQQSQQQQANS) forms a coiled coil. In terms of domain architecture, Protein kinase spans 1064-1400 (ESMIKKYSNG…VNELLSSSLF (337 aa)). Over residues 1099 to 1122 (MGDSIGNNITSPPSPTSLKDSSSI) the composition is skewed to polar residues. Residues 1123-1134 (QQQQQQQQQQQQ) show a composition bias toward low complexity. Positions 1135 to 1153 (NSESTRPITPPNVSNSTTD) are enriched in polar residues. Low complexity-rich tracts occupy residues 1339 to 1360 (NHSNSSNNNNNNNNNNNNNNKN) and 1785 to 1801 (TTTTTTTTTTTTTNNNN). WD repeat units follow at residues 1864 to 1903 (EHNASIKSLAVSPSEERFISGSKDNLVKIWSLDSTKSLTT), 1906 to 1942 (QHMHTAHTVHFVSSLVASCDITSIQVWDPESKIKVNV), 1945 to 1983 (EPTGSFSCFEPISSKYLIASTCESTLSFYDLSMGSLTHE), 2007 to 2048 (SNSN…ILEQ), 2052 to 2089 (HHDSPVNKLIAQGSRYLISCGDKSVIQWDLHQSPPIIS), and 2149 to 2179 (PKQSNILSLSFFPLHHVLLAGTDDGFIKICQ).

The protein belongs to the protein kinase superfamily. Ser/Thr protein kinase family.

The polypeptide is Probable inactive serine/threonine-protein kinase lvsG (lvsG) (Dictyostelium discoideum (Social amoeba)).